Consider the following 512-residue polypeptide: Glutamyl-tRNA(Gln) amidotransferase subunit A (512 aa).

Catalysis depends on charge relay system residues Lys82 and Ser157. The active-site Acyl-ester intermediate is Ser181.

This sequence belongs to the amidase family. GatA subfamily. In terms of assembly, heterotrimer of A, B and C subunits.

It catalyses the reaction L-glutamyl-tRNA(Gln) + L-glutamine + ATP + H2O = L-glutaminyl-tRNA(Gln) + L-glutamate + ADP + phosphate + H(+). Functionally, allows the formation of correctly charged Gln-tRNA(Gln) through the transamidation of misacylated Glu-tRNA(Gln) in organisms which lack glutaminyl-tRNA synthetase. The reaction takes place in the presence of glutamine and ATP through an activated gamma-phospho-Glu-tRNA(Gln). The polypeptide is Glutamyl-tRNA(Gln) amidotransferase subunit A (Bordetella petrii (strain ATCC BAA-461 / DSM 12804 / CCUG 43448)).